Here is a 122-residue protein sequence, read N- to C-terminus: UPF0145 protein Bmul_3577/BMULJ_04940 (122 aa).

The protein belongs to the UPF0145 family.

The chain is UPF0145 protein Bmul_3577/BMULJ_04940 from Burkholderia multivorans (strain ATCC 17616 / 249).